The primary structure comprises 200 residues: MSPIMDALVPMVVEQTSRGERSYDIYSRLLKERVIFLTGQVEDHMANLVVAQLLFLESENPDKDIFLYINSPGGSVTAGMSIYDTMQFIKPNVSTVCMGQACSMGAFLLAGGAAGKRYVLPNSRVMIHQPLGGFQGQASDIQIHAQEILTIKQKLNNLLAEHTGQPLEVIERDTDRDNFMSAEQAVEYGIVDAVLSHRGA.

Serine 103 (nucleophile) is an active-site residue. Histidine 128 is a catalytic residue.

This sequence belongs to the peptidase S14 family. As to quaternary structure, fourteen ClpP subunits assemble into 2 heptameric rings which stack back to back to give a disk-like structure with a central cavity, resembling the structure of eukaryotic proteasomes.

The protein resides in the cytoplasm. The catalysed reaction is Hydrolysis of proteins to small peptides in the presence of ATP and magnesium. alpha-casein is the usual test substrate. In the absence of ATP, only oligopeptides shorter than five residues are hydrolyzed (such as succinyl-Leu-Tyr-|-NHMec, and Leu-Tyr-Leu-|-Tyr-Trp, in which cleavage of the -Tyr-|-Leu- and -Tyr-|-Trp bonds also occurs).. Functionally, cleaves peptides in various proteins in a process that requires ATP hydrolysis. Has a chymotrypsin-like activity. Plays a major role in the degradation of misfolded proteins. The sequence is that of ATP-dependent Clp protease proteolytic subunit from Vibrio parahaemolyticus serotype O3:K6 (strain RIMD 2210633).